A 492-amino-acid chain; its full sequence is SH2 domain-containing adapter protein E (492 aa).

4 disordered regions span residues 46–193, 214–236, 260–332, and 347–384; these read TASE…DKAK, KRTK…EPYD, LDGP…EQPW, and FEGS…KVDP. S103 bears the Phosphoserine mark. Residues 149–158 are compositionally biased toward basic and acidic residues; it reads IKVDTQEKNG. The segment covering 168 to 184 has biased composition (low complexity); sequence TSSSSSSSSSASSSPSS. Composition is skewed to basic and acidic residues over residues 214–227, 268–285, 306–332, 349–361, and 373–383; these read KRTK…RVGE, ETVK…KDLL, AEVK…EQPW, GSDR…DAGR, and LSDHGDGEKVD. Positions 393–488 constitute an SH2 domain; that stretch reads WYHGSISRAE…AEHMTLLHPV (96 aa).

In terms of tissue distribution, expressed in heart, brain, lung and skeletal muscle.

This Mus musculus (Mouse) protein is SH2 domain-containing adapter protein E (She).